The sequence spans 396 residues: tRNA (guanine-N(7)-)-methyltransferase (396 aa).

S-adenosyl-L-methionine-binding residues include E125, E150, and D177. Residues K203 and D233 each coordinate substrate.

This sequence belongs to the class I-like SAM-binding methyltransferase superfamily. TrmB family.

It catalyses the reaction guanosine(46) in tRNA + S-adenosyl-L-methionine = N(7)-methylguanosine(46) in tRNA + S-adenosyl-L-homocysteine. It functions in the pathway tRNA modification; N(7)-methylguanine-tRNA biosynthesis. Its function is as follows. Catalyzes the formation of N(7)-methylguanine at position 46 (m7G46) in tRNA. The sequence is that of tRNA (guanine-N(7)-)-methyltransferase from Helicobacter hepaticus (strain ATCC 51449 / 3B1).